The primary structure comprises 130 residues: Small ribosomal subunit protein uS8 (130 aa).

Belongs to the universal ribosomal protein uS8 family. As to quaternary structure, part of the 30S ribosomal subunit. Contacts proteins S5 and S12.

Its function is as follows. One of the primary rRNA binding proteins, it binds directly to 16S rRNA central domain where it helps coordinate assembly of the platform of the 30S subunit. The polypeptide is Small ribosomal subunit protein uS8 (Buchnera aphidicola subsp. Acyrthosiphon kondoi (Acyrthosiphon kondoi symbiotic bacterium)).